Here is a 152-residue protein sequence, read N- to C-terminus: MTIWVDADACPNVIKEILYRAAERMQMPLVLVANQSLRVPPSRFIRTLRVAAGFDVADNEIVRQCEAGDLVITADIPLAAEAIEKGAAALNPRGERYTPATIRERLTMRDFMDTLRASGIQTGGPDSLSQRDRQAFAAELEKWWLKVQRSRG.

The protein belongs to the UPF0178 family.

The chain is UPF0178 protein YaiI from Escherichia coli O81 (strain ED1a).